The chain runs to 593 residues: NADH-quinone oxidoreductase subunit C/D (593 aa).

Residues 1 to 184 are NADH dehydrogenase I subunit C; the sequence is MTADSALYIP…DPYSLSAAKQ (184 aa). The interval 208–593 is NADH dehydrogenase I subunit D; the sequence is DYMFLNLGPN…IDFVMADVDR (386 aa).

It in the N-terminal section; belongs to the complex I 30 kDa subunit family. The protein in the C-terminal section; belongs to the complex I 49 kDa subunit family. In terms of assembly, NDH-1 is composed of 13 different subunits. Subunits NuoB, CD, E, F, and G constitute the peripheral sector of the complex.

It is found in the cell inner membrane. It catalyses the reaction a quinone + NADH + 5 H(+)(in) = a quinol + NAD(+) + 4 H(+)(out). NDH-1 shuttles electrons from NADH, via FMN and iron-sulfur (Fe-S) centers, to quinones in the respiratory chain. The immediate electron acceptor for the enzyme in this species is believed to be ubiquinone. Couples the redox reaction to proton translocation (for every two electrons transferred, four hydrogen ions are translocated across the cytoplasmic membrane), and thus conserves the redox energy in a proton gradient. The sequence is that of NADH-quinone oxidoreductase subunit C/D from Pseudomonas paraeruginosa (strain DSM 24068 / PA7) (Pseudomonas aeruginosa (strain PA7)).